A 113-amino-acid chain; its full sequence is Large ribosomal subunit protein bL17 (113 aa).

It belongs to the bacterial ribosomal protein bL17 family. In terms of assembly, part of the 50S ribosomal subunit. Contacts protein L32.

This chain is Large ribosomal subunit protein bL17, found in Clostridium kluyveri (strain NBRC 12016).